A 344-amino-acid chain; its full sequence is N-acetyl-gamma-glutamyl-phosphate reductase (344 aa).

Cys-150 is an active-site residue.

Belongs to the NAGSA dehydrogenase family. Type 1 subfamily.

Its subcellular location is the cytoplasm. The enzyme catalyses N-acetyl-L-glutamate 5-semialdehyde + phosphate + NADP(+) = N-acetyl-L-glutamyl 5-phosphate + NADPH + H(+). It functions in the pathway amino-acid biosynthesis; L-arginine biosynthesis; N(2)-acetyl-L-ornithine from L-glutamate: step 3/4. Functionally, catalyzes the NADPH-dependent reduction of N-acetyl-5-glutamyl phosphate to yield N-acetyl-L-glutamate 5-semialdehyde. The polypeptide is N-acetyl-gamma-glutamyl-phosphate reductase (Pseudomonas fluorescens (strain SBW25)).